Reading from the N-terminus, the 364-residue chain is NADH-quinone oxidoreductase subunit H (364 aa).

Helical transmembrane passes span 15-35, 84-104, 123-143, 169-189, 206-226, 257-277, 302-322, and 341-361; these read LLVL…IAFL, AVFI…WAAI, VGVL…IMGG, IGFV…TTIV, YFPL…SALA, LFML…TILF, LSGL…FALV, and IFLP…TFVG.

This sequence belongs to the complex I subunit 1 family. As to quaternary structure, NDH-1 is composed of 14 different subunits. Subunits NuoA, H, J, K, L, M, N constitute the membrane sector of the complex.

It is found in the cell inner membrane. It carries out the reaction a quinone + NADH + 5 H(+)(in) = a quinol + NAD(+) + 4 H(+)(out). Functionally, NDH-1 shuttles electrons from NADH, via FMN and iron-sulfur (Fe-S) centers, to quinones in the respiratory chain. The immediate electron acceptor for the enzyme in this species is believed to be ubiquinone. Couples the redox reaction to proton translocation (for every two electrons transferred, four hydrogen ions are translocated across the cytoplasmic membrane), and thus conserves the redox energy in a proton gradient. This subunit may bind ubiquinone. The sequence is that of NADH-quinone oxidoreductase subunit H from Hyphomonas neptunium (strain ATCC 15444).